We begin with the raw amino-acid sequence, 364 residues long: Mannose-1-phosphate guanyltransferase (364 aa).

This sequence belongs to the transferase hexapeptide repeat family.

It is found in the cytoplasm. It carries out the reaction alpha-D-mannose 1-phosphate + GTP + H(+) = GDP-alpha-D-mannose + diphosphate. Its pathway is nucleotide-sugar biosynthesis; GDP-alpha-D-mannose biosynthesis; GDP-alpha-D-mannose from alpha-D-mannose 1-phosphate (GTP route): step 1/1. Functionally, involved in cell wall synthesis where it is required for glycosylation. Involved in cell cycle progression through cell-size checkpoint. This Hypocrea jecorina (Trichoderma reesei) protein is Mannose-1-phosphate guanyltransferase (mpg1).